A 921-amino-acid polypeptide reads, in one-letter code: DNA mismatch repair protein MutS 1 (921 aa).

ATP is bound at residue 619-626 (GPNMSGKS). The segment at 837–887 (FRDGAAQSGGAAAGSTAEPVATDGDPEHAPGEAAAEGPKGDERAASLDSET) is disordered. The span at 840-853 (GAAQSGGAAAGSTA) shows a compositional bias: low complexity.

This sequence belongs to the DNA mismatch repair MutS family.

This protein is involved in the repair of mismatches in DNA. It is possible that it carries out the mismatch recognition step. This protein has a weak ATPase activity. The chain is DNA mismatch repair protein MutS 1 from Haloarcula marismortui (strain ATCC 43049 / DSM 3752 / JCM 8966 / VKM B-1809) (Halobacterium marismortui).